Here is a 155-residue protein sequence, read N- to C-terminus: Small ribosomal subunit protein uS9 (155 aa).

Belongs to the universal ribosomal protein uS9 family.

The sequence is that of Small ribosomal subunit protein uS9 from Rhizobium leguminosarum bv. trifolii (strain WSM2304).